Here is a 201-residue protein sequence, read N- to C-terminus: 3-isopropylmalate dehydratase small subunit (201 aa).

The protein belongs to the LeuD family. LeuD type 1 subfamily. In terms of assembly, heterodimer of LeuC and LeuD.

It catalyses the reaction (2R,3S)-3-isopropylmalate = (2S)-2-isopropylmalate. The protein operates within amino-acid biosynthesis; L-leucine biosynthesis; L-leucine from 3-methyl-2-oxobutanoate: step 2/4. Its function is as follows. Catalyzes the isomerization between 2-isopropylmalate and 3-isopropylmalate, via the formation of 2-isopropylmaleate. The polypeptide is 3-isopropylmalate dehydratase small subunit (Agrobacterium fabrum (strain C58 / ATCC 33970) (Agrobacterium tumefaciens (strain C58))).